A 118-amino-acid polypeptide reads, in one-letter code: Large ribosomal subunit protein bL20 (118 aa).

The protein belongs to the bacterial ribosomal protein bL20 family.

In terms of biological role, binds directly to 23S ribosomal RNA and is necessary for the in vitro assembly process of the 50S ribosomal subunit. It is not involved in the protein synthesizing functions of that subunit. The polypeptide is Large ribosomal subunit protein bL20 (Clostridioides difficile (strain 630) (Peptoclostridium difficile)).